An 89-amino-acid chain; its full sequence is Small ribosomal subunit protein uS15 (89 aa).

The protein belongs to the universal ribosomal protein uS15 family. In terms of assembly, part of the 30S ribosomal subunit. Forms a bridge to the 50S subunit in the 70S ribosome, contacting the 23S rRNA.

Its function is as follows. One of the primary rRNA binding proteins, it binds directly to 16S rRNA where it helps nucleate assembly of the platform of the 30S subunit by binding and bridging several RNA helices of the 16S rRNA. Functionally, forms an intersubunit bridge (bridge B4) with the 23S rRNA of the 50S subunit in the ribosome. The sequence is that of Small ribosomal subunit protein uS15 from Chlorobium phaeobacteroides (strain DSM 266 / SMG 266 / 2430).